Reading from the N-terminus, the 512-residue chain is Maturase K (512 aa).

Belongs to the intron maturase 2 family. MatK subfamily.

Its subcellular location is the plastid. It is found in the chloroplast. Its function is as follows. Usually encoded in the trnK tRNA gene intron. Probably assists in splicing its own and other chloroplast group II introns. The sequence is that of Maturase K from Oenothera glazioviana (Large-flowered evening primrose).